The chain runs to 309 residues: MQLQFLGTGAGQPSKARNVSSLVLKLLEEINEVWMFDCGEGTQHQILETTIKPRKISKIFITHLHGDHIFGLPGFLSSRSFQANEEQTDIEIYGPKGIKNFVMSSLRVSGSRLPYRIDFHEFDENSLGKILETDKFTVYADKLDHTIFCVGYRIMQKDLEGTLDADKLRAAGVPFGPLFGKVKNGQDIVLEGGTKIIAADYISAPRPGKTITILGDTRKTDSSVRLAVAADVLVHEATYGKGDEKMARKHGHSTNMQAAEVAKEAGVKQLLLNHVSARFLSKDISVMRQDASTVFENVHVVKDLEEVEI.

Residues histidine 63, histidine 65, aspartate 67, histidine 68, histidine 145, aspartate 216, and histidine 274 each coordinate Zn(2+). Aspartate 67 functions as the Proton acceptor in the catalytic mechanism.

It belongs to the RNase Z family. In terms of assembly, homodimer. The cofactor is Zn(2+).

The catalysed reaction is Endonucleolytic cleavage of RNA, removing extra 3' nucleotides from tRNA precursor, generating 3' termini of tRNAs. A 3'-hydroxy group is left at the tRNA terminus and a 5'-phosphoryl group is left at the trailer molecule.. Functionally, zinc phosphodiesterase, which displays some tRNA 3'-processing endonuclease activity. Probably involved in tRNA maturation, by removing a 3'-trailer from precursor tRNA. This Streptococcus gordonii (strain Challis / ATCC 35105 / BCRC 15272 / CH1 / DL1 / V288) protein is Ribonuclease Z.